A 255-amino-acid polypeptide reads, in one-letter code: tRNA (guanine-N(7)-)-methyltransferase (255 aa).

Positions 1-35 (MTRTNDASGGGKLPRKRFYRARAHSNPLSDSHFPV) are disordered. The span at 13–23 (LPRKRFYRARA) shows a compositional bias: basic residues. S-adenosyl-L-methionine contacts are provided by residues Gly-75, 98–99 (EL), 131–132 (NS), and Leu-151. The active site involves Asp-154. Residue 229-231 (TEE) coordinates S-adenosyl-L-methionine.

It belongs to the class I-like SAM-binding methyltransferase superfamily. TrmB family.

The protein resides in the nucleus. The catalysed reaction is guanosine(46) in tRNA + S-adenosyl-L-methionine = N(7)-methylguanosine(46) in tRNA + S-adenosyl-L-homocysteine. It functions in the pathway tRNA modification; N(7)-methylguanine-tRNA biosynthesis. In terms of biological role, catalyzes the formation of N(7)-methylguanine at position 46 (m7G46) in tRNA. The protein is tRNA (guanine-N(7)-)-methyltransferase of Zea mays (Maize).